A 96-amino-acid chain; its full sequence is UPF0235 protein YggU (96 aa).

Belongs to the UPF0235 family.

This Salmonella agona (strain SL483) protein is UPF0235 protein YggU.